A 107-amino-acid polypeptide reads, in one-letter code: Sperm protamine P1 (107 aa).

2 stretches are compositionally biased toward basic and acidic residues: residues 1–10 and 20–33; these read ALRKVDRNRF and REAK…EFPG. Residues 1–35 constitute a propeptide, removed in mature form; it reads ALRKVDRNRFVLDNVTPQPREAKRYKEEEEFPGHG. Residues 1–107 form a disordered region; that stretch reads ALRKVDRNRF…RRRRRGKKGK (107 aa). Basic residues predominate over residues 34–107; that stretch reads HGRRRRRRSK…RRRRRGKKGK (74 aa). Phosphoserine is present on S42.

In terms of processing, a series of N-terminal cleavages yield the mature protein. Only the mature protein is phosphorylated. As to expression, gonads.

Its subcellular location is the nucleus. The protein resides in the chromosome. Functionally, protamines substitute for histones in the chromatin of sperm during the haploid phase of spermatogenesis. They compact sperm DNA into a highly condensed, stable and inactive complex. In Bolinus brandaris (Purple dye murex), this protein is Sperm protamine P1.